A 345-amino-acid polypeptide reads, in one-letter code: Opioid-binding protein/cell adhesion molecule (345 aa).

An N-terminal signal peptide occupies residues 1–27; that stretch reads MGVCGYLFLPWKCLVVVSLRLLFLVPT. 3 Ig-like C2-type domains span residues 39–126, 136–219, and 223–310; these read PKAM…PKTS, PQIM…VKIT, and PPYI…ASIT. N-linked (GlcNAc...) asparagine glycosylation is found at Asn44, Asn70, and Asn140. The cysteines at positions 57 and 115 are disulfide-linked. Intrachain disulfides connect Cys157–Cys202 and Cys244–Cys296. Asn285, Asn293, and Asn306 each carry an N-linked (GlcNAc...) asparagine glycan. Asn322 carries GPI-anchor amidated asparagine lipidation. A propeptide spans 323–345 (removed in mature form); that stretch reads SASRALACLWLSGTLLAHFFIKF.

The protein belongs to the immunoglobulin superfamily. IgLON family.

It is found in the cell membrane. Functionally, binds opioids in the presence of acidic lipids; probably involved in cell contact. The polypeptide is Opioid-binding protein/cell adhesion molecule (OPCML) (Homo sapiens (Human)).